A 296-amino-acid polypeptide reads, in one-letter code: Formamidopyrimidine-DNA glycosylase (296 aa).

The Schiff-base intermediate with DNA role is filled by Pro2. Glu3 acts as the Proton donor in catalysis. Residue Lys58 is the Proton donor; for beta-elimination activity of the active site. Residues His106, Arg125, and Lys167 each coordinate DNA. An FPG-type zinc finger spans residues 258–294 (RVYDRVGLPCSRPGCAGAITRIVQANRSTFFCATCQP). Arg284 functions as the Proton donor; for delta-elimination activity in the catalytic mechanism.

It belongs to the FPG family. In terms of assembly, monomer. Zn(2+) is required as a cofactor.

The catalysed reaction is Hydrolysis of DNA containing ring-opened 7-methylguanine residues, releasing 2,6-diamino-4-hydroxy-5-(N-methyl)formamidopyrimidine.. It carries out the reaction 2'-deoxyribonucleotide-(2'-deoxyribose 5'-phosphate)-2'-deoxyribonucleotide-DNA = a 3'-end 2'-deoxyribonucleotide-(2,3-dehydro-2,3-deoxyribose 5'-phosphate)-DNA + a 5'-end 5'-phospho-2'-deoxyribonucleoside-DNA + H(+). Functionally, involved in base excision repair of DNA damaged by oxidation or by mutagenic agents. Acts as a DNA glycosylase that recognizes and removes damaged bases. Has a preference for oxidized purines, such as 7,8-dihydro-8-oxoguanine (8-oxoG). Has AP (apurinic/apyrimidinic) lyase activity and introduces nicks in the DNA strand. Cleaves the DNA backbone by beta-delta elimination to generate a single-strand break at the site of the removed base with both 3'- and 5'-phosphates. The protein is Formamidopyrimidine-DNA glycosylase of Methylobacterium radiotolerans (strain ATCC 27329 / DSM 1819 / JCM 2831 / NBRC 15690 / NCIMB 10815 / 0-1).